Here is a 647-residue protein sequence, read N- to C-terminus: Threonine--tRNA ligase (647 aa).

A TGS domain is found at 1-61 (MIKITFPDGA…EEDGSIEIVT (61 aa)). The catalytic stretch occupies residues 240–538 (DHRKLGKELD…LIETYKGAFP (299 aa)). Cys-334, His-385, and His-515 together coordinate Zn(2+).

This sequence belongs to the class-II aminoacyl-tRNA synthetase family. Homodimer. The cofactor is Zn(2+).

It is found in the cytoplasm. The enzyme catalyses tRNA(Thr) + L-threonine + ATP = L-threonyl-tRNA(Thr) + AMP + diphosphate + H(+). In terms of biological role, catalyzes the attachment of threonine to tRNA(Thr) in a two-step reaction: L-threonine is first activated by ATP to form Thr-AMP and then transferred to the acceptor end of tRNA(Thr). Also edits incorrectly charged L-seryl-tRNA(Thr). This is Threonine--tRNA ligase from Streptococcus pyogenes serotype M1.